Reading from the N-terminus, the 341-residue chain is L-threonine 3-dehydrogenase (341 aa).

Residue Cys-38 participates in Zn(2+) binding. Catalysis depends on charge relay system residues Thr-40 and His-43. Zn(2+) contacts are provided by His-63, Glu-64, Cys-93, Cys-96, Cys-99, and Cys-107. NAD(+) contacts are provided by residues Ile-175, Asp-195, Arg-200, Leu-262 to Ile-264, and Ile-286 to Tyr-287.

The protein belongs to the zinc-containing alcohol dehydrogenase family. Homotetramer. Zn(2+) is required as a cofactor.

It is found in the cytoplasm. It carries out the reaction L-threonine + NAD(+) = (2S)-2-amino-3-oxobutanoate + NADH + H(+). Its pathway is amino-acid degradation; L-threonine degradation via oxydo-reductase pathway; glycine from L-threonine: step 1/2. In terms of biological role, catalyzes the NAD(+)-dependent oxidation of L-threonine to 2-amino-3-ketobutyrate. In Shewanella baltica (strain OS185), this protein is L-threonine 3-dehydrogenase.